The primary structure comprises 90 residues: Large ribosomal subunit protein bL31B-1 (90 aa).

This sequence belongs to the bacterial ribosomal protein bL31 family. Type B subfamily. In terms of assembly, part of the 50S ribosomal subunit.

The protein is Large ribosomal subunit protein bL31B-1 of Streptomyces coelicolor (strain ATCC BAA-471 / A3(2) / M145).